Reading from the N-terminus, the 407-residue chain is Arginine biosynthesis bifunctional protein ArgJ (407 aa).

Substrate contacts are provided by Thr155, Lys181, Thr192, Glu278, Asn402, and Thr407. The active-site Nucleophile is the Thr192.

It belongs to the ArgJ family. Heterotetramer of two alpha and two beta chains.

Its subcellular location is the cytoplasm. The catalysed reaction is N(2)-acetyl-L-ornithine + L-glutamate = N-acetyl-L-glutamate + L-ornithine. It catalyses the reaction L-glutamate + acetyl-CoA = N-acetyl-L-glutamate + CoA + H(+). It functions in the pathway amino-acid biosynthesis; L-arginine biosynthesis; L-ornithine and N-acetyl-L-glutamate from L-glutamate and N(2)-acetyl-L-ornithine (cyclic): step 1/1. The protein operates within amino-acid biosynthesis; L-arginine biosynthesis; N(2)-acetyl-L-ornithine from L-glutamate: step 1/4. Catalyzes two activities which are involved in the cyclic version of arginine biosynthesis: the synthesis of N-acetylglutamate from glutamate and acetyl-CoA as the acetyl donor, and of ornithine by transacetylation between N(2)-acetylornithine and glutamate. In Thiobacillus denitrificans (strain ATCC 25259 / T1), this protein is Arginine biosynthesis bifunctional protein ArgJ.